The chain runs to 512 residues: Ribose import ATP-binding protein RbsA 1 (512 aa).

2 consecutive ABC transporter domains span residues Phe-8 to Glu-244 and Pro-257 to Gly-502. Gly-40–Ser-47 lines the ATP pocket.

This sequence belongs to the ABC transporter superfamily. Ribose importer (TC 3.A.1.2.1) family. As to quaternary structure, the complex is composed of an ATP-binding protein (RbsA), two transmembrane proteins (RbsC) and a solute-binding protein (RbsB).

The protein resides in the cell inner membrane. The catalysed reaction is D-ribose(out) + ATP + H2O = D-ribose(in) + ADP + phosphate + H(+). Functionally, part of the ABC transporter complex RbsABC involved in ribose import. Responsible for energy coupling to the transport system. The sequence is that of Ribose import ATP-binding protein RbsA 1 from Rhizobium etli (strain ATCC 51251 / DSM 11541 / JCM 21823 / NBRC 15573 / CFN 42).